We begin with the raw amino-acid sequence, 110 residues long: Cysteine-rich and transmembrane domain-containing protein 1 (110 aa).

Positions 1 to 18 (MNYENPPPYASPPAPYPP) are enriched in pro residues. The segment at 1 to 45 (MNYENPPPYASPPAPYPPYGQQQPSYPVPNQYPGNPPGPVGYQPA) is disordered. Low complexity predominate over residues 19–29 (YGQQQPSYPVP). Residues 87–104 (SGESACLTACWTALCCCC) form a helical membrane-spanning segment.

This sequence belongs to the CYSTM1 family.

It localises to the membrane. In Xenopus tropicalis (Western clawed frog), this protein is Cysteine-rich and transmembrane domain-containing protein 1 (cystm1).